Here is a 310-residue protein sequence, read N- to C-terminus: Manganese ABC transporter substrate-binding lipoprotein scaA (310 aa).

Positions 1-19 (MKKCRFLVLLLLAFVGLAA) are cleaved as a signal peptide. A lipid anchor (N-palmitoyl cysteine) is attached at Cys-20. Cys-20 is lipidated: S-diacylglycerol cysteine. Mn(2+)-binding residues include His-68, His-140, Glu-206, and Asp-281.

It belongs to the bacterial solute-binding protein 9 family. Lipoprotein receptor antigen (Lrai) subfamily. The complex is composed of two ATP-binding proteins (ScaC), two transmembrane proteins (ScaB) and a solute-binding protein (ScaA).

The protein resides in the cell membrane. In terms of biological role, part of ATP-binding cassette (ABC) transport system ScaABC involved in manganese import. Essential for growth under Mn(2+)-limiting conditions. Also acts as an adhesin which is involved on adherence to extracellular matrix. It is an important factor in pathogenesis and infection. This chain is Manganese ABC transporter substrate-binding lipoprotein scaA, found in Streptococcus gordonii.